The chain runs to 784 residues: Cas scaffolding protein family member 4 (784 aa).

The SH3 domain occupies 11-73 (PKALLARALY…PANRLQILEE (63 aa)). Residues Ser-197, Ser-246, Ser-302, Ser-373, and Ser-387 each carry the phosphoserine modification. Residues 343-376 (TPNIYDVPRAMPDVPQAGKELGKAGGPSENSVDH) form a disordered region. Residues 466–536 (RDSLEANIDA…LLETKERLES (71 aa)) adopt a coiled-coil conformation. Residues 614–635 (KEGESYQRKAPFQKQRASEQPP) form a disordered region.

This sequence belongs to the CAS family. As to quaternary structure, interacts (via SH3 domain) with PTK2/FAK1 (via C-terminus). Phosphorylated on tyrosines by SRC.

It localises to the cytoplasm. The protein localises to the cytoskeleton. It is found in the cell junction. Its subcellular location is the focal adhesion. In terms of biological role, docking protein that plays a role in tyrosine kinase-based signaling related to cell adhesion and cell spreading. Regulates PTK2/FAK1 activity, focal adhesion integrity, and cell spreading. This Sus scrofa (Pig) protein is Cas scaffolding protein family member 4.